Consider the following 380-residue polypeptide: Succinyl-diaminopimelate desuccinylase (380 aa).

Position 71 (H71) interacts with Zn(2+). D73 is a catalytic residue. Zn(2+) is bound at residue D104. Catalysis depends on E138, which acts as the Proton acceptor. Positions 139, 167, and 353 each coordinate Zn(2+).

Belongs to the peptidase M20A family. DapE subfamily. Homodimer. It depends on Zn(2+) as a cofactor. Co(2+) serves as cofactor.

The enzyme catalyses N-succinyl-(2S,6S)-2,6-diaminopimelate + H2O = (2S,6S)-2,6-diaminopimelate + succinate. Its pathway is amino-acid biosynthesis; L-lysine biosynthesis via DAP pathway; LL-2,6-diaminopimelate from (S)-tetrahydrodipicolinate (succinylase route): step 3/3. In terms of biological role, catalyzes the hydrolysis of N-succinyl-L,L-diaminopimelic acid (SDAP), forming succinate and LL-2,6-diaminopimelate (DAP), an intermediate involved in the bacterial biosynthesis of lysine and meso-diaminopimelic acid, an essential component of bacterial cell walls. The sequence is that of Succinyl-diaminopimelate desuccinylase from Shewanella baltica (strain OS185).